A 124-amino-acid polypeptide reads, in one-letter code: DHMTTPPGANDWDITDGSWSLASEPSQQDLFSASAPYNFGHFNDSEITKDLNDIDSAKSENPTYRKAAFVKYQEDMNKKAYVVPTNFSLSYTPVNKRVVGMTLDYGAMDTWSEIGVSSAKLATK.

It belongs to the bacterial solute-binding protein 5 family. In terms of assembly, the complex is composed of two ATP-binding proteins (OppD and OppF), two transmembrane proteins (OppB and OppC) and a solute-binding protein (OppA).

It localises to the cell membrane. Its function is as follows. Part of the ABC transporter complex OppABCDF involved in the uptake of oligopeptides. This chain is Oligopeptide-binding protein OppA (oppA), found in Lactococcus lactis subsp. cremoris (Streptococcus cremoris).